The sequence spans 613 residues: Metacaspase-1 (613 aa).

Residues histidine 404 and cysteine 460 contribute to the active site.

This sequence belongs to the peptidase C14B family. Monomer.

Activated by Ca(2+). Cysteine protease that cleaves specifically after arginine or lysine residues. May play a role in apoptosis. This Plasmodium falciparum (isolate 3D7) protein is Metacaspase-1.